The primary structure comprises 351 residues: 3-dehydroquinate synthase (351 aa).

NAD(+)-binding positions include 60-65, 94-98, 118-119, lysine 131, lysine 140, and 158-161; these read DGEEYK, GVISD, TT, and FLKT. Zn(2+) is bound by residues glutamate 173, histidine 239, and histidine 256.

This sequence belongs to the sugar phosphate cyclases superfamily. Dehydroquinate synthase family. Requires Co(2+) as cofactor. The cofactor is Zn(2+). NAD(+) is required as a cofactor.

The protein localises to the cytoplasm. It carries out the reaction 7-phospho-2-dehydro-3-deoxy-D-arabino-heptonate = 3-dehydroquinate + phosphate. It participates in metabolic intermediate biosynthesis; chorismate biosynthesis; chorismate from D-erythrose 4-phosphate and phosphoenolpyruvate: step 2/7. In terms of biological role, catalyzes the conversion of 3-deoxy-D-arabino-heptulosonate 7-phosphate (DAHP) to dehydroquinate (DHQ). This chain is 3-dehydroquinate synthase, found in Campylobacter jejuni subsp. doylei (strain ATCC BAA-1458 / RM4099 / 269.97).